The primary structure comprises 258 residues: Indole-3-glycerol phosphate synthase (258 aa).

Belongs to the TrpC family.

The enzyme catalyses 1-(2-carboxyphenylamino)-1-deoxy-D-ribulose 5-phosphate + H(+) = (1S,2R)-1-C-(indol-3-yl)glycerol 3-phosphate + CO2 + H2O. It participates in amino-acid biosynthesis; L-tryptophan biosynthesis; L-tryptophan from chorismate: step 4/5. In Campylobacter jejuni subsp. jejuni serotype O:23/36 (strain 81-176), this protein is Indole-3-glycerol phosphate synthase.